Here is a 184-residue protein sequence, read N- to C-terminus: Photosystem I assembly protein Ycf4 (184 aa).

2 helical membrane-spanning segments follow: residues 22–42 (LCWA…GFSS) and 64–84 (IVMC…WCTI).

The protein belongs to the Ycf4 family.

The protein resides in the plastid. The protein localises to the chloroplast thylakoid membrane. In terms of biological role, seems to be required for the assembly of the photosystem I complex. This chain is Photosystem I assembly protein Ycf4, found in Angiopteris evecta (Mule's foot fern).